The chain runs to 182 residues: Large ribosomal subunit protein uL6 (182 aa).

Belongs to the universal ribosomal protein uL6 family. Part of the 50S ribosomal subunit.

This protein binds to the 23S rRNA, and is important in its secondary structure. It is located near the subunit interface in the base of the L7/L12 stalk, and near the tRNA binding site of the peptidyltransferase center. The sequence is that of Large ribosomal subunit protein uL6 from Dehalococcoides mccartyi (strain ATCC BAA-2100 / JCM 16839 / KCTC 5957 / BAV1).